We begin with the raw amino-acid sequence, 330 residues long: DNA primase small subunit PriS (330 aa).

Catalysis depends on residues D101 and D103. The Zn(2+) site is built by C116, C119, C128, and D131. D235 is an active-site residue.

Belongs to the eukaryotic-type primase small subunit family. Heterodimer of a small subunit (PriS) and a large subunit (PriL). It depends on Mg(2+) as a cofactor. Mn(2+) is required as a cofactor.

In terms of biological role, catalytic subunit of DNA primase, an RNA polymerase that catalyzes the synthesis of short RNA molecules used as primers for DNA polymerase during DNA replication. The small subunit contains the primase catalytic core and has DNA synthesis activity on its own. Binding to the large subunit stabilizes and modulates the activity, increasing the rate of DNA synthesis while decreasing the length of the DNA fragments, and conferring RNA synthesis capability. The DNA polymerase activity may enable DNA primase to also catalyze primer extension after primer synthesis. May also play a role in DNA repair. The chain is DNA primase small subunit PriS from Saccharolobus islandicus (strain M.16.27) (Sulfolobus islandicus).